A 954-amino-acid polypeptide reads, in one-letter code: MMAAAVEEEEMVERMHGWARDMDVASRRAEEEAMRRYDAASWLRSTVGVVCARDLPDEPSEEEFRLGLRNGIVLCNALNKIQPGAIPKVVQAQSDAAGPTDGSALCAYQYFENLRNFLVVVEDLRLPTFEVSDLEKGGKGVRVVDCVLALKSFSESNKTGRQASCKYGGLSKPLTARKYFILKNTDAFMNKIMKGHSAEAIQSEFSEGQSIVTDFSIESNEMTTSDSLSILLRKVLLDKKPEEVPLIVESILSKVIQEYEHRIAIQNKMDEEEQNLLNITEQVNHVVVNGDGEVKQFQLEAQTNFDVQQKQIQELKGALSFVKSGMEQLRLQYSEEFAKLGKHFYTLSNAASSYHKVLEENRKLYNQIQDLKGNIRVYCRVRPFLPGHRSLSSSVADTEERTITIITPTKYGKDGCKSFSFNRVFGPASTQEEVFSDMQPLIRSVLDGFNVCIFAYGQTGSGKTFTMSGPKVLTEESLGVNYRALNDLFNIKAQRKGTIDYEISVQMIEIYNEQVRDLLQDGGNRRLEIRNTPQKGLAVPDASIVPVTSTADVVELMNQGQKNRAVGSTAINDRSSRSHSCLSVHVQGKYLTSGAMLRGCMHLVDLAGSERVDKSEVVGDRLKEAQYINKSLSALGDVIASLAQKNSHVPYRNSKLTQLLQDSLGGQAKTLMFVHVSPELDAVGETISTLKFAERVASVELGAAKANKEGSEVRELKEQIATLKAALAKKEGEPENIQSTQSSPDMYRIKRGNAIPAFPKNRQPMEEVGNLEVRNNATPMQKKASFQFSGVLSENNSSDLAENCNGIQKTDRMAVGNNQFENGNSILELEPGATQLPTFFYQRYDPDKQRRRAEPVETDDSDSFDAATSSPSDQEMLLSTSGLKADGIASRGAFIIKKPQTKNTKITATKIPNLAMKSPMSEKRLQTPIRNSKQLPFSTTGGRRTRNGKINTPK.

Residues 33–155 enclose the Calponin-homology (CH) domain; sequence AMRRYDAASW…CVLALKSFSE (123 aa). Positions 374-699 constitute a Kinesin motor domain; the sequence is NIRVYCRVRP…LKFAERVASV (326 aa). Position 457 to 464 (457 to 464) interacts with ATP; it reads GQTGSGKT. Residues 704 to 733 adopt a coiled-coil conformation; that stretch reads AKANKEGSEVRELKEQIATLKAALAKKEGE. The span at 844–855 shows a compositional bias: basic and acidic residues; it reads YDPDKQRRRAEP. Disordered stretches follow at residues 844–876 and 912–954; these read YDPDKQRRRAEPVETDDSDSFDAATSSPSDQEM and PNLA…NTPK. Residues 864–873 show a composition bias toward low complexity; it reads FDAATSSPSD. Over residues 928 to 954 the composition is skewed to polar residues; sequence PIRNSKQLPFSTTGGRRTRNGKINTPK.

Belongs to the TRAFAC class myosin-kinesin ATPase superfamily. Kinesin family. KIN-14 subfamily. As to quaternary structure, forms oligomers in vitro. Interacts with actin microfilaments. Binds to actin in vitro through its calponin-homology (CH) domain. As to expression, expressed in primary leaf, primary root, developing flower and coleoptile.

The protein resides in the cytoplasm. The protein localises to the cytoskeleton. With respect to regulation, the microtubule-dependent ATPase activity is regulated by actin binding. Functionally, minus end-directed motor protein that transports actin filaments along microtubules. Plays a central role in the polar orientation of actin filaments along microtubules, and thus a contribution to the organization of the cytoskeletal architecture. Links the actin microfilaments with the cortical microtubules in both cycling and non-cycling cells. Required for efficient cell elongation by its participation in the premitotic nuclear positioning. In Oryza sativa subsp. japonica (Rice), this protein is Kinesin-like protein KIN-14Q.